The chain runs to 405 residues: Histidine decarboxylase (405 aa).

Residue His121 coordinates substrate. The residue at position 234 (Lys234) is an N6-(pyridoxal phosphate)lysine.

It belongs to the group II decarboxylase family. In terms of assembly, homotetramer. It depends on pyridoxal 5'-phosphate as a cofactor.

It carries out the reaction L-histidine + H(+) = histamine + CO2. The protein operates within siderophore biosynthesis; pseudomonine biosynthesis. The chain is Histidine decarboxylase from Pseudomonas fluorescens.